The following is a 180-amino-acid chain: uncharacterized protein (180 aa).

This is an uncharacterized protein from Clostridium acetobutylicum (strain ATCC 824 / DSM 792 / JCM 1419 / IAM 19013 / LMG 5710 / NBRC 13948 / NRRL B-527 / VKM B-1787 / 2291 / W).